The sequence spans 126 residues: Glycine cleavage system H protein (126 aa).

The Lipoyl-binding domain maps to 21 to 103 (TVTIGISEHA…YEGGWIVKVK (83 aa)). K62 carries the N6-lipoyllysine modification.

The protein belongs to the GcvH family. As to quaternary structure, the glycine cleavage system is composed of four proteins: P, T, L and H. The cofactor is (R)-lipoate.

The glycine cleavage system catalyzes the degradation of glycine. The H protein shuttles the methylamine group of glycine from the P protein to the T protein. The protein is Glycine cleavage system H protein of Vibrio parahaemolyticus serotype O3:K6 (strain RIMD 2210633).